The following is a 245-amino-acid chain: NAD(P)H-quinone oxidoreductase subunit K (245 aa).

[4Fe-4S] cluster-binding residues include cysteine 58, cysteine 59, cysteine 123, and cysteine 154. Positions 210–245 (SDTRSAPPKELAEAIGMPIPPALLTEKAQKEEQTRG) are disordered. The span at 236–245 (KAQKEEQTRG) shows a compositional bias: basic and acidic residues.

Belongs to the complex I 20 kDa subunit family. As to quaternary structure, NDH-1 can be composed of about 15 different subunits; different subcomplexes with different compositions have been identified which probably have different functions. It depends on [4Fe-4S] cluster as a cofactor.

The protein localises to the cellular thylakoid membrane. The enzyme catalyses a plastoquinone + NADH + (n+1) H(+)(in) = a plastoquinol + NAD(+) + n H(+)(out). It catalyses the reaction a plastoquinone + NADPH + (n+1) H(+)(in) = a plastoquinol + NADP(+) + n H(+)(out). Its function is as follows. NDH-1 shuttles electrons from an unknown electron donor, via FMN and iron-sulfur (Fe-S) centers, to quinones in the respiratory and/or the photosynthetic chain. The immediate electron acceptor for the enzyme in this species is believed to be plastoquinone. Couples the redox reaction to proton translocation, and thus conserves the redox energy in a proton gradient. Cyanobacterial NDH-1 also plays a role in inorganic carbon-concentration. This is NAD(P)H-quinone oxidoreductase subunit K from Nostoc punctiforme (strain ATCC 29133 / PCC 73102).